A 445-amino-acid chain; its full sequence is C4-dicarboxylate transport protein (445 aa).

The next 8 helical transmembrane spans lie at 24 to 44, 62 to 82, 105 to 125, 163 to 183, 201 to 221, 237 to 257, 322 to 342, and 370 to 390; these read VLYI…WLSP, LIKM…IAHI, FALI…GLAA, GDIL…MALG, FGVI…AMAF, LVAL…GVIA, IYMT…LSFS, and AGTL…VFSI.

It belongs to the dicarboxylate/amino acid:cation symporter (DAACS) (TC 2.A.23) family.

It is found in the cell inner membrane. Responsible for the transport of dicarboxylates such as succinate, fumarate, and malate from the periplasm across the membrane. This Rhodopseudomonas palustris (strain HaA2) protein is C4-dicarboxylate transport protein.